A 405-amino-acid chain; its full sequence is uncharacterized protein (405 aa).

A signal peptide spans 1-34 (MNKFLKYFLILLALVLIVVPIVFATLLFKTSQDA). A compositionally biased stretch (basic and acidic residues) spans 348–359 (EQNDTTDKDKTS). The disordered stretch occupies residues 348 to 405 (EQNDTTDKDKTSNENSDSTNNSDSSNQQQPATDQNSNQNQGGTQQAPQASNNQNGVVN). Composition is skewed to low complexity over residues 360–373 (NENSDSTNNSDSSN) and 381–392 (QNSNQNQGGTQQ). Residues 393–405 (APQASNNQNGVVN) show a composition bias toward polar residues.

It belongs to the LytR/CpsA/Psr (LCP) family.

This is an uncharacterized protein from Staphylococcus aureus (strain NCTC 8325 / PS 47).